The primary structure comprises 266 residues: Undecaprenyl-diphosphatase (266 aa).

8 helical membrane-spanning segments follow: residues methionine 1 to isoleucine 21, glutamine 39 to phenylalanine 59, tryptophan 87 to isoleucine 107, phenylalanine 111 to alanine 131, valine 144 to threonine 164, alanine 183 to valine 203, alanine 218 to leucine 238, and methionine 246 to leucine 266.

It belongs to the UppP family.

The protein resides in the cell inner membrane. The catalysed reaction is di-trans,octa-cis-undecaprenyl diphosphate + H2O = di-trans,octa-cis-undecaprenyl phosphate + phosphate + H(+). Catalyzes the dephosphorylation of undecaprenyl diphosphate (UPP). Confers resistance to bacitracin. This Shewanella pealeana (strain ATCC 700345 / ANG-SQ1) protein is Undecaprenyl-diphosphatase.